A 152-amino-acid polypeptide reads, in one-letter code: Chemokine-like factor (152 aa).

Positions 13–133 (FCCTLKCFVK…DCALMCQKLR (121 aa)) constitute an MARVEL domain. Transmembrane regions (helical) follow at residues 19–39 (CFVKFLRLVVTVTSMIFFIVG), 46–66 (IVITGFEVTVIFCFLVLYTCG), 81–101 (VINSMVTALCMLIVSVLALIP), and 108–128 (ILGGVFGFLTVTCTIADCALM).

The protein belongs to the chemokine-like factor family. In terms of tissue distribution, ubiquitous.

The protein localises to the membrane. In terms of biological role, may play an important role in inflammation and regeneration of skeletal muscle. Essential for embryonic development. The chain is Chemokine-like factor (Cklf) from Mus musculus (Mouse).